The sequence spans 223 residues: Neurotrophic factor BDNF precursor form (223 aa).

The N-terminal stretch at 1–5 is a signal peptide; it reads SCMKA. Positions 6-114 are excised as a propeptide; that stretch reads APMKEVGVRG…AANMSXRVRR (109 aa). Asn-107 carries an N-linked (GlcNAc...) asparagine glycan. 2 disulfide bridges follow: Cys-127–Cys-194 and Cys-172–Cys-223.

This sequence belongs to the NGF-beta family.

It is found in the secreted. Functionally, promotes the survival of neuronal populations that are all located either in the central nervous system or directly connected to it. In Eryx jayakari (Arabian sand boa), this protein is Neurotrophic factor BDNF precursor form (BDNF).